Reading from the N-terminus, the 31-residue chain is GSIPCGESCVWIPCISSVVGCACKNKVCYKN.

The segment at residues 1 to 31 (GSIPCGESCVWIPCISSVVGCACKNKVCYKN) is a cross-link (cyclopeptide (Gly-Asn)). 3 cysteine pairs are disulfide-bonded: Cys-5/Cys-21, Cys-9/Cys-23, and Cys-14/Cys-28.

Belongs to the cyclotide family. Bracelet subfamily. Post-translationally, this is a cyclic peptide.

Its function is as follows. Probably participates in a plant defense mechanism. The polypeptide is Cyclotide mden-K (Melicytus dentatus (Tree violet)).